Reading from the N-terminus, the 805-residue chain is Acetyl-CoA decarbonylase/synthase complex subunit alpha 2 (805 aa).

[4Fe-4S] cluster-binding residues include C72, C75, C76, C78, C83, and C93. Position 116 (H116) interacts with CO. The [Ni-4Fe-4S] cluster site is built by H249, C277, and C322. 2 4Fe-4S ferredoxin-type domains span residues 407–435 and 445–474; these read EEFK…IPEA and EYLE…LNVL. Positions 416, 419, 422, 426, 454, 457, 460, and 464 each coordinate [4Fe-4S] cluster. 3 residues coordinate [Ni-4Fe-4S] cluster: C522, C551, and C586.

This sequence belongs to the Ni-containing carbon monoxide dehydrogenase family. In terms of assembly, heterotetramer of two alpha and two epsilon subunits. The ACDS complex is made up of alpha, epsilon, beta, gamma and delta subunits with a probable stoichiometry of (alpha(2)epsilon(2))(4)-beta(8)-(gamma(1)delta(1))(8). [4Fe-4S] cluster serves as cofactor. The cofactor is [Ni-4Fe-4S] cluster.

It catalyses the reaction CO + 2 oxidized [2Fe-2S]-[ferredoxin] + H2O = 2 reduced [2Fe-2S]-[ferredoxin] + CO2 + 2 H(+). It functions in the pathway one-carbon metabolism; methanogenesis from acetate. Part of the ACDS complex that catalyzes the reversible cleavage of acetyl-CoA, allowing growth on acetate as sole source of carbon and energy. The alpha-epsilon subcomponent functions as a carbon monoxide dehydrogenase. In Methanosarcina acetivorans (strain ATCC 35395 / DSM 2834 / JCM 12185 / C2A), this protein is Acetyl-CoA decarbonylase/synthase complex subunit alpha 2.